We begin with the raw amino-acid sequence, 34 residues long: Photosystem II reaction center protein M (34 aa).

A helical membrane pass occupies residues 5 to 25 (ILAFIATALFILIPTSFLLII).

Belongs to the PsbM family. PSII is composed of 1 copy each of membrane proteins PsbA, PsbB, PsbC, PsbD, PsbE, PsbF, PsbH, PsbI, PsbJ, PsbK, PsbL, PsbM, PsbT, PsbX, PsbY, PsbZ, Psb30/Ycf12, at least 3 peripheral proteins of the oxygen-evolving complex and a large number of cofactors. It forms dimeric complexes. Detected in both etioplasts and green leaves; PSII is only assembled in green leaves.

Its subcellular location is the plastid. The protein localises to the chloroplast thylakoid membrane. Functionally, one of the components of the core complex of photosystem II (PSII). PSII is a light-driven water:plastoquinone oxidoreductase that uses light energy to abstract electrons from H(2)O, generating O(2) and a proton gradient subsequently used for ATP formation. It consists of a core antenna complex that captures photons, and an electron transfer chain that converts photonic excitation into a charge separation. This subunit is found at the monomer-monomer interface. The polypeptide is Photosystem II reaction center protein M (Hordeum vulgare (Barley)).